The primary structure comprises 374 residues: Spore germination protein GerLB (374 aa).

Transmembrane regions (helical) follow at residues 16-36 (IGFA…PRDI), 44-64 (DGWI…WFVT), 86-106 (PVAY…TAYE), 122-142 (TPIQ…IAGS), 149-169 (LNVL…LLNI), 192-212 (VKNS…AVLL), 227-247 (AVMV…SVFT), 279-301 (FFTT…ASLL), 313-333 (IFIF…SSLN), and 341-361 (YLAW…LIVY).

The protein belongs to the amino acid-polyamine-organocation (APC) superfamily. Spore germination protein (SGP) (TC 2.A.3.9) family.

It localises to the membrane. In terms of biological role, contributes to the L-alanine germination response. This Bacillus cereus protein is Spore germination protein GerLB (gerLB).